The chain runs to 140 residues: Nucleoside diphosphate kinase (140 aa).

Residues K11, F59, R87, T93, R104, and N114 each contribute to the ATP site. The active-site Pros-phosphohistidine intermediate is the H117.

This sequence belongs to the NDK family. In terms of assembly, homotetramer. The cofactor is Mg(2+).

The protein localises to the cytoplasm. The enzyme catalyses a 2'-deoxyribonucleoside 5'-diphosphate + ATP = a 2'-deoxyribonucleoside 5'-triphosphate + ADP. It carries out the reaction a ribonucleoside 5'-diphosphate + ATP = a ribonucleoside 5'-triphosphate + ADP. Major role in the synthesis of nucleoside triphosphates other than ATP. The ATP gamma phosphate is transferred to the NDP beta phosphate via a ping-pong mechanism, using a phosphorylated active-site intermediate. In Hyphomonas neptunium (strain ATCC 15444), this protein is Nucleoside diphosphate kinase.